Here is a 161-residue protein sequence, read N- to C-terminus: uncharacterized protein (161 aa).

The segment at residues 1 to 23 is a signal peptide (or 21); the sequence is MKKFAFLTALFAACYLPNAYAHA. The helical transmembrane segment at 129 to 149 threads the bilayer; that stretch reads IYLHDILGGIGYIVGIAGLIA.

It localises to the membrane. This is an uncharacterized protein from Haemophilus influenzae (strain ATCC 51907 / DSM 11121 / KW20 / Rd).